Consider the following 147-residue polypeptide: Large ribosomal subunit protein uL15 (147 aa).

A disordered region spans residues 1–45 (MTIKLHHLRPAPGAKSDKIRVGRGEGGKRGKTAGRGTKGTKARKN). Residues 15–28 (KSDKIRVGRGEGGK) show a composition bias toward basic and acidic residues.

This sequence belongs to the universal ribosomal protein uL15 family. Part of the 50S ribosomal subunit.

Its function is as follows. Binds to the 23S rRNA. In Rhodococcus jostii (strain RHA1), this protein is Large ribosomal subunit protein uL15.